The primary structure comprises 352 residues: tRNA uridine(34) hydroxylase (352 aa).

In terms of domain architecture, Rhodanese spans 144-238 (SDPDVILIDT…YLEEVPASDS (95 aa)). Cys198 serves as the catalytic Cysteine persulfide intermediate.

The protein belongs to the TrhO family.

It carries out the reaction uridine(34) in tRNA + AH2 + O2 = 5-hydroxyuridine(34) in tRNA + A + H2O. Functionally, catalyzes oxygen-dependent 5-hydroxyuridine (ho5U) modification at position 34 in tRNAs. This chain is tRNA uridine(34) hydroxylase, found in Psychrobacter cryohalolentis (strain ATCC BAA-1226 / DSM 17306 / VKM B-2378 / K5).